The chain runs to 386 residues: Succinate--CoA ligase [ADP-forming] subunit beta (386 aa).

The ATP-grasp domain occupies 9 to 244 (KEILRKYGVP…HDEEDPLETR (236 aa)). ATP-binding positions include lysine 46, 53–55 (GRG), glutamate 99, cysteine 102, and glutamate 107. Mg(2+) is bound by residues asparagine 199 and aspartate 213. Residues asparagine 264 and 321–323 (GIM) contribute to the substrate site.

This sequence belongs to the succinate/malate CoA ligase beta subunit family. In terms of assembly, heterotetramer of two alpha and two beta subunits. The cofactor is Mg(2+).

The catalysed reaction is succinate + ATP + CoA = succinyl-CoA + ADP + phosphate. The enzyme catalyses GTP + succinate + CoA = succinyl-CoA + GDP + phosphate. It participates in carbohydrate metabolism; tricarboxylic acid cycle; succinate from succinyl-CoA (ligase route): step 1/1. In terms of biological role, succinyl-CoA synthetase functions in the citric acid cycle (TCA), coupling the hydrolysis of succinyl-CoA to the synthesis of either ATP or GTP and thus represents the only step of substrate-level phosphorylation in the TCA. The beta subunit provides nucleotide specificity of the enzyme and binds the substrate succinate, while the binding sites for coenzyme A and phosphate are found in the alpha subunit. The sequence is that of Succinate--CoA ligase [ADP-forming] subunit beta from Rickettsia prowazekii (strain Madrid E).